The chain runs to 356 residues: MTMNNFTTTMQDISTAFTIGSLEIKWYGIFITVGFVLAIILACVKLEKWYKISCNPFYWFVFIGIPVSLLGARIWSFIIGDASKSLATQNFFAAFFNFREGGLAIEGGVLLTVIAALIYFPLVLKKPQYNVKTKIGNEYYVKQVSMWVYADAIVPCILVGQIIGRWGNFFNQEVYGPIATEAELAWLKTLMPGVYNNMFITTTGNLHHPFFLYESFINFWFFLAIYIGGEFIKKRKAGDLAIAYFICYGLLRSCMEPFRYSDYQFATSIVMSVLFALFGIILLVCNHLVFSKHRDFKFWEFIIYKTKKFFKQDIKEFLDSKRNADNLKVQKQINKNITKEPNFYRKPSEIFYYNGY.

4 helical membrane passes run isoleucine 24–valine 44, tryptophan 59–isoleucine 79, leucine 103–valine 123, and valine 144–glycine 164. Arginine 165 contributes to the a 1,2-diacyl-sn-glycero-3-phospho-(1'-sn-glycerol) binding site. 2 consecutive transmembrane segments (helical) span residues proline 209–glycine 229 and phenylalanine 265–cysteine 285.

It belongs to the Lgt family.

The protein localises to the cell membrane. The catalysed reaction is L-cysteinyl-[prolipoprotein] + a 1,2-diacyl-sn-glycero-3-phospho-(1'-sn-glycerol) = an S-1,2-diacyl-sn-glyceryl-L-cysteinyl-[prolipoprotein] + sn-glycerol 1-phosphate + H(+). It functions in the pathway protein modification; lipoprotein biosynthesis (diacylglyceryl transfer). In terms of biological role, catalyzes the transfer of the diacylglyceryl group from phosphatidylglycerol to the sulfhydryl group of the N-terminal cysteine of a prolipoprotein, the first step in the formation of mature lipoproteins. In Malacoplasma penetrans (strain HF-2) (Mycoplasma penetrans), this protein is Phosphatidylglycerol--prolipoprotein diacylglyceryl transferase.